A 382-amino-acid chain; its full sequence is LIM homeobox transcription factor 1-alpha (382 aa).

LIM zinc-binding domains follow at residues Ser-33–Val-92 and Val-92–Leu-154. 2 disordered regions span residues Ala-161–Arg-208 and Lys-252–Ile-286. The homeobox DNA-binding region spans Pro-195–Ala-254. Positions Arg-256–Arg-269 are enriched in low complexity.

The protein resides in the nucleus. In terms of biological role, acts as a transcriptional activator by binding to an A/T-rich sequence, the FLAT element, in the insulin gene promoter. Required for development of the roof plate and, in turn, for specification of dorsal cell fates in the CNS and developing vertebrae. The polypeptide is LIM homeobox transcription factor 1-alpha (Lmx1a) (Mus musculus (Mouse)).